The sequence spans 671 residues: cGMP-dependent protein kinase 1 (671 aa).

S2 is subject to N-acetylserine. Residues 2–59 (SELEEDFAKILMLKEERIKELEKRLSEKEEEIQELKRKLHKCQSVLPVPSTHIGPRTT) adopt a coiled-coil conformation. Residues 2 to 102 (SELEEDFAKI…LIKEAILDND (101 aa)) form a required for dimerization region. Residues 9–44 (AKILMLKEERIKELEKRLSEKEEEIQELKRKLHKCQ) are leucine-zipper. The segment at 50-75 (PSTHIGPRTTRAQGISAEPQTYRSFH) is autoinhibitory domain. At T59 the chain carries Phosphothreonine; by autocatalysis. The tract at residues 103-220 (FMKNLELSQI…EYMEFLKSVP (118 aa)) is cGMP-binding, high affinity. 3',5'-cyclic AMP is bound by residues 167 to 170 (GELA) and 177 to 178 (RT). Residues 167–170 (GELA), 177–178 (RT), R282, 291–294 (GEKA), 301–302 (RT), and Y336 each bind 3',5'-cyclic GMP. A cGMP-binding, low affinity region spans residues 221–341 (TFQSLPEEIL…SNKAYEDAEA (121 aa)). The region spanning 360–619 (FNIIDTLGVG…VKDIQKHKWF (260 aa)) is the Protein kinase domain. ATP is bound by residues 366–374 (LGVGGFGRV) and K390. Catalysis depends on D484, which acts as the Proton acceptor. Residue T515 is modified to Phosphothreonine. Residues 620–671 (EGFNWEGLRKGTLTPPIIPSVASPTDTSNFDSFPEDNDEPPPDDNSGWDIDF) form the AGC-kinase C-terminal domain. The interval 635–671 (PIIPSVASPTDTSNFDSFPEDNDEPPPDDNSGWDIDF) is disordered. A compositionally biased stretch (acidic residues) spans 652-661 (FPEDNDEPPP).

It belongs to the protein kinase superfamily. AGC Ser/Thr protein kinase family. cGMP subfamily. In terms of assembly, isoform alpha: parallel homodimer or heterodimer and also heterotetramer. Interacts directly with PPP1R12A. Non-covalent dimer of dimer of PRKG1-PRKG1 and PPP1R12A-PPP1R12A. This interaction targets PRKG1 to stress fibers to mediate smooth muscle cell relaxation and vasodilation in responses to rises in cGMP. Isoform beta: antiparallel homodimer. Part of cGMP kinase signaling complex at least composed of ACTA2/alpha-actin, CNN1/calponin H1, PLN/phospholamban, PRKG1 and ITPR1. Interacts with IRAG1. Forms a stable complex with ITPR1, IRAG1, and isoform beta of PRKG1. Interacts with TRPC7 (via ankyrin repeat domain). Isoform alpha interacts with RGS2. Interacts with GTF2I. In terms of processing, autophosphorylation increases kinase activity. Post-translationally, 65 kDa monomer is produced by proteolytic cleavage. High concentrations are detected in various smooth muscle: lung, rumen, trachea, aorta, uterus and stomach. Isoform alpha is expressed predominantly in heart, cerebellum and lung, whereas the beta isoform is expressed in high concentrations in trachea, aorta, stomach and uterus.

It localises to the cytoplasm. It carries out the reaction L-seryl-[protein] + ATP = O-phospho-L-seryl-[protein] + ADP + H(+). The catalysed reaction is L-threonyl-[protein] + ATP = O-phospho-L-threonyl-[protein] + ADP + H(+). With respect to regulation, in the absence of cGMP, PRKG1 activity is suppressed by autoinhibitory contacts. Serine/threonine protein kinase that acts as a key mediator of the nitric oxide (NO)/cGMP signaling pathway. GMP binding activates PRKG1, which phosphorylates serines and threonines on many cellular proteins. Numerous protein targets for PRKG1 phosphorylation are implicated in modulating cellular calcium, but the contribution of each of these targets may vary substantially among cell types. Proteins that are phosphorylated by PRKG1 regulate platelet activation and adhesion, smooth muscle contraction, cardiac function, gene expression, feedback of the NO-signaling pathway, and other processes involved in several aspects of the CNS like axon guidance, hippocampal and cerebellar learning, circadian rhythm and nociception. Smooth muscle relaxation is mediated through lowering of intracellular free calcium, by desensitization of contractile proteins to calcium, and by decrease in the contractile state of smooth muscle or in platelet activation. Regulates intracellular calcium levels via several pathways: phosphorylates IRAG1 and inhibits IP3-induced Ca(2+) release from intracellular stores, phosphorylation of KCNMA1 (BKCa) channels decreases intracellular Ca(2+) levels, which leads to increased opening of this channel. PRKG1 phosphorylates the canonical transient receptor potential channel (TRPC) family which inactivates the associated inward calcium current. Another mode of action of NO/cGMP/PKGI signaling involves PKGI-mediated inactivation of the Ras homolog gene family member A (RhoA). Phosphorylation of RHOA by PRKG1 blocks the action of this protein in myriad processes: regulation of RHOA translocation; decreasing contraction; controlling vesicle trafficking, reduction of myosin light chain phosphorylation resulting in vasorelaxation. Activation of PRKG1 by NO signaling also alters gene expression in a number of tissues. In smooth muscle cells, increased cGMP and PRKG1 activity influence expression of smooth muscle-specific contractile proteins, levels of proteins in the NO/cGMP signaling pathway, down-regulation of the matrix proteins osteopontin and thrombospondin-1 to limit smooth muscle cell migration and phenotype. Regulates vasodilator-stimulated phosphoprotein (VASP) functions in platelets and smooth muscle. The chain is cGMP-dependent protein kinase 1 (PRKG1) from Bos taurus (Bovine).